We begin with the raw amino-acid sequence, 39 residues long: Photosystem II reaction center protein J (39 aa).

The chain crosses the membrane as a helical span at residues 9 to 29; sequence LWMVATVGGLAAGGLLILFVF.

Belongs to the PsbJ family. PSII is composed of 1 copy each of membrane proteins PsbA, PsbB, PsbC, PsbD, PsbE, PsbF, PsbH, PsbI, PsbJ, PsbK, PsbL, PsbM, PsbT, PsbX, PsbY, PsbZ, Psb30/Ycf12, at least 3 peripheral proteins of the oxygen-evolving complex and a large number of cofactors. It forms dimeric complexes.

It localises to the plastid. Its subcellular location is the chloroplast thylakoid membrane. Its function is as follows. One of the components of the core complex of photosystem II (PSII). PSII is a light-driven water:plastoquinone oxidoreductase that uses light energy to abstract electrons from H(2)O, generating O(2) and a proton gradient subsequently used for ATP formation. It consists of a core antenna complex that captures photons, and an electron transfer chain that converts photonic excitation into a charge separation. This chain is Photosystem II reaction center protein J, found in Emiliania huxleyi (Coccolithophore).